Reading from the N-terminus, the 560-residue chain is Membrane protein insertase YidC (560 aa).

The helical transmembrane segment at 1 to 21 (MDIKRTILIAALAIVSYVMVL) threads the bilayer. A disordered region spans residues 42 to 66 (VAPGLPDGVPAANNGASADVPSANA). Helical transmembrane passes span 341–361 (LELT…FWLL), 367–387 (LLGN…GLFF), 437–457 (LGGC…YWVL), 468–488 (WMLW…PIIM), and 515–535 (PIIF…YWVV).

This sequence belongs to the OXA1/ALB3/YidC family. Type 1 subfamily. Interacts with the Sec translocase complex via SecD. Specifically interacts with transmembrane segments of nascent integral membrane proteins during membrane integration.

The protein localises to the cell inner membrane. Required for the insertion and/or proper folding and/or complex formation of integral membrane proteins into the membrane. Involved in integration of membrane proteins that insert both dependently and independently of the Sec translocase complex, as well as at least some lipoproteins. Aids folding of multispanning membrane proteins. This is Membrane protein insertase YidC from Pseudomonas putida (strain W619).